The primary structure comprises 307 residues: Acetyl-coenzyme A carboxylase carboxyl transferase subunit beta (307 aa).

A CoA carboxyltransferase N-terminal domain is found at 25–294 (LWIKDPESGE…TEENGSRRLP (270 aa)).

The protein belongs to the AccD/PCCB family. Acetyl-CoA carboxylase is a heterohexamer composed of biotin carboxyl carrier protein (AccB), biotin carboxylase (AccC) and two subunits each of ACCase subunit alpha (AccA) and ACCase subunit beta (AccD).

The protein resides in the cytoplasm. It catalyses the reaction N(6)-carboxybiotinyl-L-lysyl-[protein] + acetyl-CoA = N(6)-biotinyl-L-lysyl-[protein] + malonyl-CoA. It participates in lipid metabolism; malonyl-CoA biosynthesis; malonyl-CoA from acetyl-CoA: step 1/1. In terms of biological role, component of the acetyl coenzyme A carboxylase (ACC) complex. Biotin carboxylase (BC) catalyzes the carboxylation of biotin on its carrier protein (BCCP) and then the CO(2) group is transferred by the transcarboxylase to acetyl-CoA to form malonyl-CoA. The chain is Acetyl-coenzyme A carboxylase carboxyl transferase subunit beta from Chelativorans sp. (strain BNC1).